The sequence spans 698 residues: Elongation factor G (698 aa).

In terms of domain architecture, tr-type G spans 10 to 285 (AGTRNIGIMA…AVVDFLPNPL (276 aa)). GTP-binding positions include 19 to 26 (AHIDAGKT), 83 to 87 (DTPGH), and 137 to 140 (NKMD).

It belongs to the TRAFAC class translation factor GTPase superfamily. Classic translation factor GTPase family. EF-G/EF-2 subfamily.

The protein resides in the cytoplasm. Functionally, catalyzes the GTP-dependent ribosomal translocation step during translation elongation. During this step, the ribosome changes from the pre-translocational (PRE) to the post-translocational (POST) state as the newly formed A-site-bound peptidyl-tRNA and P-site-bound deacylated tRNA move to the P and E sites, respectively. Catalyzes the coordinated movement of the two tRNA molecules, the mRNA and conformational changes in the ribosome. This Frankia casuarinae (strain DSM 45818 / CECT 9043 / HFP020203 / CcI3) protein is Elongation factor G.